We begin with the raw amino-acid sequence, 299 residues long: GDNF family receptor alpha-4 (299 aa).

An N-terminal signal peptide occupies residues 1 to 20 (MVRCLGPALLLLLLLGSASS). The disordered stretch occupies residues 145-198 (RGLSPAHRPPAAQASPPGLSGLVHPSAQRPRRLPAGPGRPLPARLRGPRGVPAG). Residues 177–198 (LPAGPGRPLPARLRGPRGVPAG) show a composition bias toward low complexity. N-linked (GlcNAc...) asparagine glycosylation occurs at Asn-208. Residue Gly-278 is the site of GPI-anchor amidated glycine attachment. Residues 279–299 (RALERRSLLSILPVLALPALL) constitute a propeptide, removed in mature form.

This sequence belongs to the GDNFR family. In terms of assembly, interacts with ARTN ligand and RET: forms a 2:2:2 ternary complex composed of ARTN ligand, GFRA3 and RET receptor. Interacts with SORL1. In terms of tissue distribution, predominantly expressed in the adult thyroid gland. Low levels also found in fetal adrenal and thyroid glands.

It is found in the cell membrane. It localises to the secreted. Functionally, receptor for persephin (PSPN), a growth factor that exhibits neurotrophic activity on mesencephalic dopaminergic and motor neurons. Acts by binding to its coreceptor, GFRA4, leading to autophosphorylation and activation of the RET receptor. May be important in C-cell development and, in the postnatal development of the adrenal medulla. The sequence is that of GDNF family receptor alpha-4 (GFRA4) from Homo sapiens (Human).